Consider the following 260-residue polypeptide: DNA-binding protein RFXANK (260 aa).

Residues 1 to 79 (MELTQPAEDL…STTLTNRQRG (79 aa)) are disordered. The segment covering 22–33 (GDPEDPGEEAAD) has biased composition (acidic residues). A compositionally biased stretch (polar residues) spans 57–77 (SVSSPQAGSSLKHSTTLTNRQ). 5 ANK repeats span residues 89–118 (LDSL…NLVN), 123–152 (RGFT…DPHI), 156–185 (ERES…DINI), 189–218 (NGGT…DLTT), and 222–251 (SGYT…KLFQ).

Forms homodimers. The RFX heterotetrameric complex consists of 2 molecules of RFX5 and one each of RFXAP and RFX-B/RFXANK; with each subunit representing a separate complementation group. Interacts (via ankyrin repeats) with RFX5 (via PxLPxI/L motif); the interaction is direct. RFX forms cooperative DNA binding complexes with X2BP and CBF/NF-Y. RFX associates with CIITA to form an active transcriptional complex. Interacts with RAF1. Interacts (via ankyrin repeats) with RFX7 (via PxLPxI/L motif). Post-translationally, phosphorylated by RAF1. Ubiquitous.

The protein resides in the cytoplasm. The protein localises to the nucleus. In terms of biological role, activates transcription from class II MHC promoters. Activation requires the activity of the MHC class II transactivator/CIITA. May regulate other genes in the cell. RFX binds the X1 box of MHC-II promoters. May also potentiate the activation of RAF1. Isoform 2 is not involved in the positive regulation of MHC class II genes. In Homo sapiens (Human), this protein is DNA-binding protein RFXANK (RFXANK).